Here is a 357-residue protein sequence, read N- to C-terminus: UPF0283 membrane protein BSUIS_A1077 (357 aa).

Residues 1–36 (MSDKTPRKPTAFRLEQPARVSAASEQEEPRHPRAVK) form a disordered region. Residues 27-36 (EEPRHPRAVK) are compositionally biased toward basic and acidic residues. The next 2 helical transmembrane spans lie at 78–98 (ILFG…TEDL) and 109–129 (LGWT…AIIL).

Belongs to the UPF0283 family.

It is found in the cell inner membrane. The protein is UPF0283 membrane protein BSUIS_A1077 of Brucella suis (strain ATCC 23445 / NCTC 10510).